We begin with the raw amino-acid sequence, 1342 residues long: DNA-directed RNA polymerase subunit beta (1342 aa).

Belongs to the RNA polymerase beta chain family. In terms of assembly, the RNAP catalytic core consists of 2 alpha, 1 beta, 1 beta' and 1 omega subunit. When a sigma factor is associated with the core the holoenzyme is formed, which can initiate transcription.

It catalyses the reaction RNA(n) + a ribonucleoside 5'-triphosphate = RNA(n+1) + diphosphate. In terms of biological role, DNA-dependent RNA polymerase catalyzes the transcription of DNA into RNA using the four ribonucleoside triphosphates as substrates. The polypeptide is DNA-directed RNA polymerase subunit beta (Glaesserella parasuis serovar 5 (strain SH0165) (Haemophilus parasuis)).